The sequence spans 113 residues: Large ribosomal subunit protein bL19 (113 aa).

Belongs to the bacterial ribosomal protein bL19 family.

Its function is as follows. This protein is located at the 30S-50S ribosomal subunit interface and may play a role in the structure and function of the aminoacyl-tRNA binding site. This chain is Large ribosomal subunit protein bL19, found in Corynebacterium jeikeium (strain K411).